Here is a 285-residue protein sequence, read N- to C-terminus: UPF0173 metal-dependent hydrolase Pnuc_1524 (285 aa).

It belongs to the UPF0173 family.

The chain is UPF0173 metal-dependent hydrolase Pnuc_1524 from Polynucleobacter asymbioticus (strain DSM 18221 / CIP 109841 / QLW-P1DMWA-1) (Polynucleobacter necessarius subsp. asymbioticus).